Reading from the N-terminus, the 171-residue chain is MTRQSTYSRDQLLASARGELFAPDSGRLPNDPMLMFDRITEISDAGGTHGKGLIRAELDIRPDLWFFGCHFIGDPVMPGCLGLDAMWQLTGFFLTWIGAPGRGRALGCGEVKFTGQVLPSARLVRYEVDVSRVINRKLVMAQTDARMLVDGREIYTAKDLRVGMFTSTENF.

His70 is an active-site residue.

Belongs to the thioester dehydratase family. FabA subfamily. Homodimer.

Its subcellular location is the cytoplasm. The catalysed reaction is a (3R)-hydroxyacyl-[ACP] = a (2E)-enoyl-[ACP] + H2O. The enzyme catalyses (3R)-hydroxydecanoyl-[ACP] = (2E)-decenoyl-[ACP] + H2O. It catalyses the reaction (2E)-decenoyl-[ACP] = (3Z)-decenoyl-[ACP]. It participates in lipid metabolism; fatty acid biosynthesis. Its function is as follows. Necessary for the introduction of cis unsaturation into fatty acids. Catalyzes the dehydration of (3R)-3-hydroxydecanoyl-ACP to E-(2)-decenoyl-ACP and then its isomerization to Z-(3)-decenoyl-ACP. Can catalyze the dehydratase reaction for beta-hydroxyacyl-ACPs with saturated chain lengths up to 16:0, being most active on intermediate chain length. The polypeptide is 3-hydroxydecanoyl-[acyl-carrier-protein] dehydratase (Xanthomonas euvesicatoria pv. vesicatoria (strain 85-10) (Xanthomonas campestris pv. vesicatoria)).